The following is a 1169-amino-acid chain: Integrin alpha-X (1169 aa).

Positions 1–19 (MSCTWIAFLLLLGFVSCLG) are cleaved as a signal peptide. Over 20-1116 (FNLDAEKLTH…EMYKVHNPVP (1097 aa)) the chain is Extracellular. 2 FG-GAP repeats span residues 23–78 (DAEK…NCEP) and 79–138 (ISLQ…QSQN). Cysteines 69 and 76 form a disulfide. The N-linked (GlcNAc...) asparagine glycan is linked to Asn-89. 2 disulfides stabilise this stretch: Cys-108–Cys-126 and Cys-116–Cys-146. One can recognise a VWFA domain in the interval 152-330 (DIVFLIDGSG…DALKDIENQL (179 aa)). Mg(2+) contacts are provided by Asp-158, Ser-160, Ser-162, and Asp-260. N-linked (GlcNAc...) asparagine glycosylation is present at Asn-267. FG-GAP repeat units follow at residues 341 to 392 (ETPS…PTFI), 393 to 444 (NMSQ…SRHW), 445 to 505 (RPKS…GSRW), 508 to 566 (GTTL…QDIA), and 571 to 631 (QRIS…FTPA). A glycan (N-linked (GlcNAc...) asparagine) is linked at Asn-393. Ca(2+)-binding residues include Asp-467, Asp-469, Asp-471, and Asp-475. Cysteines 496 and 507 form a disulfide. Asp-531, Asn-533, Asp-535, Asp-539, Asp-594, Asp-598, and Asp-602 together coordinate Ca(2+). Disulfide bonds link Cys-640/Cys-721 and Cys-656/Cys-711. A glycan (N-linked (GlcNAc...) asparagine) is linked at Asn-734. 2 cysteine pairs are disulfide-bonded: Cys-770/Cys-776 and Cys-858/Cys-873. N-linked (GlcNAc...) asparagine glycosylation occurs at Asn-949. Disulfide bonds link Cys-1007–Cys-1031 and Cys-1036–Cys-1041. N-linked (GlcNAc...) asparagine glycosylation is found at Asn-1059 and Asn-1084. The chain crosses the membrane as a helical span at residues 1117–1137 (LIVGSSVGGLLLLAIITAILY). Topologically, residues 1138–1169 (KAGFFKRQYKEMLEEANGQFVSDGTPTPQVAQ) are cytoplasmic. The short motif at 1140–1144 (GFFKR) is the GFFKR motif element.

This sequence belongs to the integrin alpha chain family. Heterodimer of an alpha and a beta subunit. Alpha-X associates with beta-2.

Its subcellular location is the membrane. In terms of biological role, integrin alpha-X/beta-2 is a receptor for fibrinogen. It recognizes the sequence G-P-R in fibrinogen. It mediates cell-cell interaction during inflammatory responses. It is especially important in monocyte adhesion and chemotaxis. In Mus musculus (Mouse), this protein is Integrin alpha-X (Itgax).